The primary structure comprises 82 residues: MAAGSTGERPFFEIITSVRYWIIHAVALPAIFVAGFLFVSSGLAYDAFGTPRPDTYFQAGESKAPVVVQRFDSKAELDTRLK.

A helical membrane pass occupies residues 22–36 (IIHAVALPAIFVAGF). Residue His-24 coordinates heme.

It belongs to the PsbE/PsbF family. In terms of assembly, heterodimer of an alpha subunit and a beta subunit. PSII is composed of 1 copy each of membrane proteins PsbA, PsbB, PsbC, PsbD, PsbE, PsbF, PsbH, PsbI, PsbJ, PsbK, PsbL, PsbM, PsbT, PsbX, PsbY, Psb30/Ycf12, peripheral proteins PsbO, CyanoQ (PsbQ), PsbU, PsbV and a large number of cofactors. It forms dimeric complexes. Heme b is required as a cofactor.

It localises to the cellular thylakoid membrane. Its function is as follows. This b-type cytochrome is tightly associated with the reaction center of photosystem II (PSII). PSII is a light-driven water:plastoquinone oxidoreductase that uses light energy to abstract electrons from H(2)O, generating O(2) and a proton gradient subsequently used for ATP formation. It consists of a core antenna complex that captures photons, and an electron transfer chain that converts photonic excitation into a charge separation. The sequence is that of Cytochrome b559 subunit alpha from Prochlorococcus marinus (strain NATL1A).